Here is a 67-residue protein sequence, read N- to C-terminus: ATP synthase F(0) complex subunit 8 (67 aa).

Residues 8–24 (TWFINIVSMILTLFIVF) form a helical membrane-spanning segment. N6-acetyllysine; alternate is present on K54. The residue at position 54 (K54) is an N6-succinyllysine; alternate. Residue K57 is modified to N6-acetyllysine.

Belongs to the ATPase protein 8 family. Component of the ATP synthase complex composed at least of ATP5F1A/subunit alpha, ATP5F1B/subunit beta, ATP5MC1/subunit c (homooctomer), MT-ATP6/subunit a, MT-ATP8/subunit 8, ATP5ME/subunit e, ATP5MF/subunit f, ATP5MG/subunit g, ATP5MK/subunit k, ATP5MJ/subunit j, ATP5F1C/subunit gamma, ATP5F1D/subunit delta, ATP5F1E/subunit epsilon, ATP5PF/subunit F6, ATP5PB/subunit b, ATP5PD/subunit d, ATP5PO/subunit OSCP. ATP synthase complex consists of a soluble F(1) head domain (subunits alpha(3) and beta(3)) - the catalytic core - and a membrane F(0) domain - the membrane proton channel (subunits c, a, 8, e, f, g, k and j). These two domains are linked by a central stalk (subunits gamma, delta, and epsilon) rotating inside the F1 region and a stationary peripheral stalk (subunits F6, b, d, and OSCP). Interacts with PRICKLE3.

The protein localises to the mitochondrion membrane. Subunit 8, of the mitochondrial membrane ATP synthase complex (F(1)F(0) ATP synthase or Complex V) that produces ATP from ADP in the presence of a proton gradient across the membrane which is generated by electron transport complexes of the respiratory chain. ATP synthase complex consist of a soluble F(1) head domain - the catalytic core - and a membrane F(1) domain - the membrane proton channel. These two domains are linked by a central stalk rotating inside the F(1) region and a stationary peripheral stalk. During catalysis, ATP synthesis in the catalytic domain of F(1) is coupled via a rotary mechanism of the central stalk subunits to proton translocation. In vivo, can only synthesize ATP although its ATP hydrolase activity can be activated artificially in vitro. Part of the complex F(0) domain. This chain is ATP synthase F(0) complex subunit 8, found in Equus caballus (Horse).